The primary structure comprises 476 residues: Ribulose bisphosphate carboxylase/oxygenase activase 1, chloroplastic (476 aa).

A chloroplast-targeting transit peptide spans 1-56 (MAAAYSTVGAVNRAPLSLNGSGARASLVPSTAFFGSSLKKSAAKFPKASSGNFKIV). 165–172 (GGKGQGKS) serves as a coordination point for ATP.

This sequence belongs to the RuBisCO activase family.

The protein localises to the plastid. Its subcellular location is the chloroplast stroma. In terms of biological role, activation of RuBisCO (ribulose-1,5-bisphosphate carboxylase/oxygenase; EC 4.1.1.39) involves the ATP-dependent carboxylation of the epsilon-amino group of lysine leading to a carbamate structure. The protein is Ribulose bisphosphate carboxylase/oxygenase activase 1, chloroplastic (RCA1) of Larrea tridentata (Creosote bush).